Consider the following 267-residue polypeptide: Phosphate import ATP-binding protein PstB (267 aa).

An ABC transporter domain is found at 21–262; that stretch reads VAARNLDFYY…PSKQQTEDYI (242 aa). 53–60 is a binding site for ATP; that stretch reads GPSGCGKS.

This sequence belongs to the ABC transporter superfamily. Phosphate importer (TC 3.A.1.7) family. The complex is composed of two ATP-binding proteins (PstB), two transmembrane proteins (PstC and PstA) and a solute-binding protein (PstS).

It localises to the cell inner membrane. The catalysed reaction is phosphate(out) + ATP + H2O = ADP + 2 phosphate(in) + H(+). Its function is as follows. Part of the ABC transporter complex PstSACB involved in phosphate import. Responsible for energy coupling to the transport system. The polypeptide is Phosphate import ATP-binding protein PstB (Xanthomonas axonopodis pv. citri (strain 306)).